We begin with the raw amino-acid sequence, 131 residues long: Profilin-1 (131 aa).

Cys13 and Cys115 are oxidised to a cystine. Positions 81-97 match the Involved in PIP2 interaction motif; it reads AVIRGKKGSGGITVKKT. Thr111 carries the phosphothreonine modification.

Belongs to the profilin family. Multimer. Occurs in many kinds of cells as a complex with monomeric actin in a 1:1 ratio. Post-translationally, phosphorylated by MAP kinases. In terms of tissue distribution, pollen specific.

It is found in the cytoplasm. The protein localises to the cytoskeleton. Binds to actin and affects the structure of the cytoskeleton. At high concentrations, profilin prevents the polymerization of actin, whereas it enhances it at low concentrations. By binding to PIP2, it inhibits the formation of IP3 and DG. The protein is Profilin-1 (PRO1) of Zea mays (Maize).